Reading from the N-terminus, the 735-residue chain is MENIEEILKAHKLTMEDYEHIKKILGREPNLVEIGIFSAMWSEHCSYKSSKKYLKGFPTEAPWVIQGPGENAGVIDIGDGMAAVFKMESHNHPSFIEPYQGAATGVGGILRDVFTMGARPVANLNALRFGDVKREDEVGAHQRYLVRGVVAGIGGYGNCVGVPTIGGEVSFDECYNGNILVNAFSLGICKKDEIFYGRAEGVGNPVIYVGSKTGRDGLGGAVMSSDSFTEETKKLRPTVQVGDPFTEKLLLEACLELFKTDYVVGIQDMGAAGLTSSSFEMAGRAGSGMKMYLDKVPMREEGMTPYELMLSESQERMLICAKKGTEEKVLEIFRKWDLDAEIIGEVTDTGVMELYWHGEKVAEVPVAPVSEEAPELDRPTKRPEYLAYIKETSIDTVPHVEDQEAFEKLLGSLEVVNKAWVYEQYDSMVQTNTVKHPGTLDASVIRVKENGKAIAMSSKCNPRYCYIDPKGGAAAAVMAAGRNVAMSGARPLAITDCLNYGNPENPEVMWQFAQGTEGIKEACRALNTPVVSGNVSLYNETNGVSVYPTPTIAMVGLNDDANKVVPSYFQETNDVVYIIGDTEKEFGGSLYLKELFGKVAGELPKIDYEKELRLWNFVIEANNRGLLKAAKDVGVGGIAIALAKMAALGNKGFLGNFCFEDSREIFSETFSRALVEIDPKNMHALEELANEIGIHATPLGTVGGNRFQLCDIDMEMEKLKDIYFNTFKREIERDL.

Histidine 44 is an active-site residue. The ATP site is built by tyrosine 47 and lysine 86. Glutamate 88 serves as a coordination point for Mg(2+). Residues 89–92 and arginine 111 each bind substrate; that span reads SHNH. Catalysis depends on histidine 90, which acts as the Proton acceptor. Residue aspartate 112 coordinates Mg(2+). Position 240 (glutamine 240) interacts with substrate. Aspartate 268 contacts Mg(2+). Residue 312-314 participates in substrate binding; the sequence is ESQ. The ATP site is built by aspartate 496 and glycine 533. Asparagine 534 lines the Mg(2+) pocket. Serine 536 serves as a coordination point for substrate.

It belongs to the FGAMS family. Monomer. Part of the FGAM synthase complex composed of 1 PurL, 1 PurQ and 2 PurS subunits.

The protein localises to the cytoplasm. The enzyme catalyses N(2)-formyl-N(1)-(5-phospho-beta-D-ribosyl)glycinamide + L-glutamine + ATP + H2O = 2-formamido-N(1)-(5-O-phospho-beta-D-ribosyl)acetamidine + L-glutamate + ADP + phosphate + H(+). The protein operates within purine metabolism; IMP biosynthesis via de novo pathway; 5-amino-1-(5-phospho-D-ribosyl)imidazole from N(2)-formyl-N(1)-(5-phospho-D-ribosyl)glycinamide: step 1/2. Functionally, part of the phosphoribosylformylglycinamidine synthase complex involved in the purines biosynthetic pathway. Catalyzes the ATP-dependent conversion of formylglycinamide ribonucleotide (FGAR) and glutamine to yield formylglycinamidine ribonucleotide (FGAM) and glutamate. The FGAM synthase complex is composed of three subunits. PurQ produces an ammonia molecule by converting glutamine to glutamate. PurL transfers the ammonia molecule to FGAR to form FGAM in an ATP-dependent manner. PurS interacts with PurQ and PurL and is thought to assist in the transfer of the ammonia molecule from PurQ to PurL. In Nitratiruptor sp. (strain SB155-2), this protein is Phosphoribosylformylglycinamidine synthase subunit PurL.